A 401-amino-acid polypeptide reads, in one-letter code: Tyrosine--tRNA ligase (401 aa).

The short motif at 43–52 (PTAPDLHLGH) is the 'HIGH' region element. A 'KMSKS' region motif is present at residues 227–231 (KMSKS). K230 serves as a coordination point for ATP. Residues 338–399 (MAIGNVLKEA…GKRRFAKINL (62 aa)) enclose the S4 RNA-binding domain.

It belongs to the class-I aminoacyl-tRNA synthetase family. TyrS type 2 subfamily. Homodimer.

It is found in the cytoplasm. It catalyses the reaction tRNA(Tyr) + L-tyrosine + ATP = L-tyrosyl-tRNA(Tyr) + AMP + diphosphate + H(+). Its function is as follows. Catalyzes the attachment of tyrosine to tRNA(Tyr) in a two-step reaction: tyrosine is first activated by ATP to form Tyr-AMP and then transferred to the acceptor end of tRNA(Tyr). The chain is Tyrosine--tRNA ligase from Idiomarina loihiensis (strain ATCC BAA-735 / DSM 15497 / L2-TR).